Reading from the N-terminus, the 423-residue chain is Adenylosuccinate synthetase (423 aa).

Residues 12-18 (GDEGKGK) and 40-42 (GHT) each bind GTP. The Proton acceptor role is filled by Asp13. Residues Asp13 and Gly40 each contribute to the Mg(2+) site. Residues 13–16 (DEGK), 38–41 (NAGH), Thr129, Arg143, Gln221, Thr236, and Arg300 contribute to the IMP site. His41 functions as the Proton donor in the catalytic mechanism. 296–302 (AVTGRKR) is a substrate binding site. GTP-binding positions include Arg302, 328–330 (KSD), and 408–410 (SVG).

It belongs to the adenylosuccinate synthetase family. In terms of assembly, homodimer. Requires Mg(2+) as cofactor.

The protein resides in the cytoplasm. The catalysed reaction is IMP + L-aspartate + GTP = N(6)-(1,2-dicarboxyethyl)-AMP + GDP + phosphate + 2 H(+). The protein operates within purine metabolism; AMP biosynthesis via de novo pathway; AMP from IMP: step 1/2. In terms of biological role, plays an important role in the de novo pathway of purine nucleotide biosynthesis. Catalyzes the first committed step in the biosynthesis of AMP from IMP. The protein is Adenylosuccinate synthetase of Parabacteroides distasonis (strain ATCC 8503 / DSM 20701 / CIP 104284 / JCM 5825 / NCTC 11152).